The following is a 379-amino-acid chain: MLAARRLLRSPRITGALSWSRWSSDAAKATTETSALLQNAEKRQQLLNELSEPLEQKGRPAIDPKETSVMLFPGQGTQYVGMAKDLLRFPGARRIFELANEVLKYDLLKICLEGPREKLNRTEHAQLAVMVSSLAALEQLREERPKAIETCVAAAGFSLGEITALVYADALPFDKALRLVQVRATAMQAACDQAAGAMAMTLYGPDTNLGEACARAQQWCLDKGVESPYCGIANYMYPHCKVVAGNVEALEFLEQNAKSFKIRRMKRLAVSGAFHTPLMQSAVEPFTKALKTVRLQDPVIRVYSNVDGKPYRHAKHILTQLPKQIVRPVKWEQTLHEMYERKQGVDFPRTFECGPGKGLVQVLEKVNAKAAQSSFNVIA.

The transit peptide at 1–23 (MLAARRLLRSPRITGALSWSRWS) directs the protein to the mitochondrion. Active-site residues include serine 158 and histidine 275.

This sequence belongs to the type II malonyltransferase family.

Its subcellular location is the mitochondrion. The enzyme catalyses holo-[ACP] + malonyl-CoA = malonyl-[ACP] + CoA. The protein operates within lipid metabolism; fatty acid biosynthesis. In terms of biological role, catalyzes the transfer of a malonyl moiety from malonyl-CoA to the free thiol group of the phosphopantetheine arm of the ACP protein. This suggests the existence of the biosynthesis of fatty acids in mitochondria. In Drosophila melanogaster (Fruit fly), this protein is Probable malonyl-CoA-acyl carrier protein transacylase, mitochondrial.